The chain runs to 192 residues: uncharacterized protein (192 aa).

In terms of domain architecture, Nudix hydrolase spans 29–160; sequence HRQAAVLIPI…PLDIYRRGDS (132 aa). A Nudix box motif is present at residues 67-89; that stretch reads GAVDDTDASVIAAALREAEEEVA. 2 residues coordinate Mg(2+): E83 and E87.

It belongs to the Nudix hydrolase family. PCD1 subfamily. The cofactor is Mn(2+). Mg(2+) serves as cofactor.

Its function is as follows. Probably mediates the hydrolysis of some nucleoside diphosphate derivatives. This is an uncharacterized protein from Escherichia coli O139:H28 (strain E24377A / ETEC).